Reading from the N-terminus, the 72-residue chain is MKSGIHPTYVTTTVTCTCGSTFTTRSTAASGQIHADVCSACHPFYTGKQKILDTGGRVARFEARYGKRTPAN.

Residues Cys16, Cys18, Cys38, and Cys41 each coordinate Zn(2+).

It belongs to the bacterial ribosomal protein bL31 family. Type A subfamily. Part of the 50S ribosomal subunit. Zn(2+) is required as a cofactor.

Binds the 23S rRNA. In Beutenbergia cavernae (strain ATCC BAA-8 / DSM 12333 / CCUG 43141 / JCM 11478 / NBRC 16432 / NCIMB 13614 / HKI 0122), this protein is Large ribosomal subunit protein bL31.